We begin with the raw amino-acid sequence, 162 residues long: Putative ureidoglycolate lyase (162 aa).

This sequence belongs to the ureidoglycolate lyase family. As to quaternary structure, homodimer. Requires Ni(2+) as cofactor.

The enzyme catalyses (S)-ureidoglycolate = urea + glyoxylate. The protein operates within nitrogen metabolism; (S)-allantoin degradation. Functionally, catalyzes the catabolism of the allantoin degradation intermediate (S)-ureidoglycolate, generating urea and glyoxylate. Involved in the utilization of allantoin as nitrogen source. The chain is Putative ureidoglycolate lyase from Agrobacterium fabrum (strain C58 / ATCC 33970) (Agrobacterium tumefaciens (strain C58)).